The primary structure comprises 254 residues: Triosephosphate isomerase (254 aa).

A substrate-binding site is contributed by Asn9–Lys11. Catalysis depends on His98, which acts as the Electrophile. Glu170 (proton acceptor) is an active-site residue. Substrate-binding positions include Gly176, Ser215, and Gly236–Gly237.

Belongs to the triosephosphate isomerase family. Homodimer.

It localises to the cytoplasm. The catalysed reaction is D-glyceraldehyde 3-phosphate = dihydroxyacetone phosphate. It participates in carbohydrate biosynthesis; gluconeogenesis. The protein operates within carbohydrate degradation; glycolysis; D-glyceraldehyde 3-phosphate from glycerone phosphate: step 1/1. Involved in the gluconeogenesis. Catalyzes stereospecifically the conversion of dihydroxyacetone phosphate (DHAP) to D-glyceraldehyde-3-phosphate (G3P). The chain is Triosephosphate isomerase from Buchnera aphidicola subsp. Cinara cedri (strain Cc).